The chain runs to 191 residues: NAD(P)H-quinone oxidoreductase subunit 6, chloroplastic (191 aa).

5 consecutive transmembrane segments (helical) span residues 10–30 (TIFL…ILLT), 32–52 (IVYS…LYLL), 61–81 (AQIL…VMLI), 89–109 (FFVY…SIFL), and 153–173 (FLLP…GAIT).

This sequence belongs to the complex I subunit 6 family. NDH is composed of at least 16 different subunits, 5 of which are encoded in the nucleus.

It localises to the plastid. The protein resides in the chloroplast thylakoid membrane. It catalyses the reaction a plastoquinone + NADH + (n+1) H(+)(in) = a plastoquinol + NAD(+) + n H(+)(out). It carries out the reaction a plastoquinone + NADPH + (n+1) H(+)(in) = a plastoquinol + NADP(+) + n H(+)(out). NDH shuttles electrons from NAD(P)H:plastoquinone, via FMN and iron-sulfur (Fe-S) centers, to quinones in the photosynthetic chain and possibly in a chloroplast respiratory chain. The immediate electron acceptor for the enzyme in this species is believed to be plastoquinone. Couples the redox reaction to proton translocation, and thus conserves the redox energy in a proton gradient. This is NAD(P)H-quinone oxidoreductase subunit 6, chloroplastic (ndhG) from Marchantia polymorpha (Common liverwort).